We begin with the raw amino-acid sequence, 558 residues long: NAD(P)H-quinone oxidoreductase chain 4 (558 aa).

14 helical membrane passes run 25–45 (FPWL…VPFI), 56–76 (WYAL…YLKG), 111–131 (LILL…PVSF), 133–153 (PKLF…VFAV), 157–177 (LLFF…LAIW), 189–209 (FIIY…AMGF), 230–250 (GFQL…LPVV), 264–284 (TAPV…YALL), 298–318 (FAPL…LTSF), 327–347 (IAYS…SFSS), 353–373 (AMLQ…LVGA), 395–417 (IMFA…SGFV), 438–458 (IVIA…LLSM), and 485–505 (IYVI…PRIM).

Belongs to the complex I subunit 4 family.

It localises to the cellular thylakoid membrane. The catalysed reaction is a plastoquinone + NADH + (n+1) H(+)(in) = a plastoquinol + NAD(+) + n H(+)(out). It catalyses the reaction a plastoquinone + NADPH + (n+1) H(+)(in) = a plastoquinol + NADP(+) + n H(+)(out). Its function is as follows. NDH-1 shuttles electrons from NAD(P)H, via FMN and iron-sulfur (Fe-S) centers, to quinones in the respiratory chain. The immediate electron acceptor for the enzyme in this species is believed to be plastoquinone. Couples the redox reaction to proton translocation (for every two electrons transferred, four hydrogen ions are translocated across the cytoplasmic membrane), and thus conserves the redox energy in a proton gradient. The chain is NAD(P)H-quinone oxidoreductase chain 4 from Prochlorococcus marinus (strain MIT 9211).